A 424-amino-acid polypeptide reads, in one-letter code: CinA-like protein (424 aa).

The protein belongs to the CinA family.

This Shewanella denitrificans (strain OS217 / ATCC BAA-1090 / DSM 15013) protein is CinA-like protein.